The sequence spans 579 residues: Rho guanine nucleotide exchange factor 25 (579 aa).

Disordered regions lie at residues 27 to 61 and 172 to 194; these read AVPG…GERE and VKAQ…EQKK. The DH domain maps to 199-375; the sequence is RSMFVLSELV…CFVPKRCNDM (177 aa). The interval 317-338 is important for binding to Rho GTPases; the sequence is LGHRLQLSDLLIKPVQRIMKYQ. The region spanning 380 to 499 is the PH domain; the sequence is RLRGFEGKLT…ESQTNSLGRS (120 aa). Residues 472 to 498 form a sufficient to bind activated GNAQ region; that stretch reads SQRDFLNALQSPIEYQRRESQTNSLGR. Disordered regions lie at residues 487–516 and 546–579; these read QRRE…VSMH and LSET…EDEL.

As to quaternary structure, interacts with activated GNAQ and GNA11. Interacts with RHOA, CDC42 and RAC1. Interacts (via the DH domain) with POPDC1 (via the C-terminus cytoplasmic tail).

The protein resides in the cytoplasm. Its subcellular location is the myofibril. It is found in the sarcomere. It localises to the cell membrane. In terms of biological role, may play a role in actin cytoskeleton reorganization in different tissues since its activation induces formation of actin stress fibers. It works as a guanine nucleotide exchange factor for Rho family of small GTPases. Links specifically G alpha q/11-coupled receptors to RHOA activation. May be an important regulator of processes involved in axon and dendrite formation. In neurons seems to be an exchange factor primarily for RAC1. Involved in skeletal myogenesis. This is Rho guanine nucleotide exchange factor 25 (Arhgef25) from Rattus norvegicus (Rat).